A 272-amino-acid chain; its full sequence is HTH-type transcriptional repressor AllR (272 aa).

Residues 1–20 form a disordered region; sequence MTEVRRRGRPGQQEPSAQKG. In terms of domain architecture, HTH iclR-type spans 21–83; that stretch reads AQALERGIAI…SQLGWWHIGL (63 aa). A DNA-binding region (H-T-H motif) is located at residues 43 to 62; it reads VSDISLNLDLPLSTTFRLLK. One can recognise an IclR-ED domain in the interval 98-267; that stretch reads VLSVGGPFMR…ARNISTALGL (170 aa). Glyoxylate is bound by residues 154 to 156, Asp207, Cys217, and 234 to 236; these read SGA and SIS.

Its function is as follows. Negative regulator of allantoin and glyoxylate utilization operons. Binds to the gcl promoter and to the allS-allA intergenic region. The chain is HTH-type transcriptional repressor AllR (allR) from Klebsiella pneumoniae.